We begin with the raw amino-acid sequence, 181 residues long: Adenylate kinase (181 aa).

An ATP-binding site is contributed by 10 to 15 (GAGKGT). Residues 30-59 (STGDLFRANISQQTPLGREAQKYMDAGDLV) form an NMP region. AMP contacts are provided by residues Thr31, Arg36, 57–59 (DLV), 85–88 (GYPR), and Gln92. The tract at residues 126-132 (ARGRNDD) is LID. Arg127 serves as a coordination point for ATP. AMP contacts are provided by Arg129 and Arg140. Residue Gly166 participates in ATP binding.

Belongs to the adenylate kinase family. In terms of assembly, monomer.

Its subcellular location is the cytoplasm. It catalyses the reaction AMP + ATP = 2 ADP. The protein operates within purine metabolism; AMP biosynthesis via salvage pathway; AMP from ADP: step 1/1. Functionally, catalyzes the reversible transfer of the terminal phosphate group between ATP and AMP. Plays an important role in cellular energy homeostasis and in adenine nucleotide metabolism. This Nocardia farcinica (strain IFM 10152) protein is Adenylate kinase.